The following is a 200-amino-acid chain: Probable GTP-binding protein EngB (200 aa).

The EngB-type G domain occupies Ser-26–Lys-200. Residues Gly-34 to Ser-41, Gly-61 to Gln-65, Asp-80 to Gly-83, Thr-147 to Asp-150, and Thr-179 to Ser-181 each bind GTP. Mg(2+)-binding residues include Ser-41 and Thr-63.

The protein belongs to the TRAFAC class TrmE-Era-EngA-EngB-Septin-like GTPase superfamily. EngB GTPase family. Mg(2+) is required as a cofactor.

Functionally, necessary for normal cell division and for the maintenance of normal septation. The sequence is that of Probable GTP-binding protein EngB from Ehrlichia chaffeensis (strain ATCC CRL-10679 / Arkansas).